The following is a 424-amino-acid chain: Inhibin beta A chain (424 aa).

Residues 1-20 (MPLLWKRGFLLVICWIIVRS) form the signal peptide. Residues 21–308 (SPTPGSEGHS…EDRQHRRRER (288 aa)) constitute a propeptide that is removed on maturation. N-linked (GlcNAc...) asparagine glycosylation is present at Asn165. Disordered stretches follow at residues 178–200 (QQRQPKGNSEAAEDMEDMGLKGE) and 260–288 (KKKKEDDGEGKEKDGGELTGEEEKEQSHR). The segment covering 263–275 (KEDDGEGKEKDGG) has biased composition (basic and acidic residues). 4 disulfides stabilise this stretch: Cys312-Cys320, Cys319-Cys389, Cys348-Cys421, and Cys352-Cys423.

It belongs to the TGF-beta family. In terms of assembly, dimeric, linked by one or more disulfide bonds. Inhibin A is a dimer of alpha and beta-A. Inhibin B is a dimer of alpha and beta-B. Activin A is a homodimer of beta-A. Activin B is a homodimer of beta-B. Activin AB is a dimer of beta-A and beta-B. As to expression, ciliary ganglion neurons. Levels are higher in the choroid than the iris.

The protein localises to the secreted. Its function is as follows. Inhibins and activins inhibit and activate, respectively, the secretion of follitropin by the pituitary gland. Inhibins/activins are involved in regulating a number of diverse functions such as hypothalamic and pituitary hormone secretion, gonadal hormone secretion, germ cell development and maturation, erythroid differentiation, insulin secretion, nerve cell survival, embryonic axial development or bone growth, depending on their subunit composition. Inhibins appear to oppose the functions of activins. Induces somatostatin in the ciliary ganglion neurons and may play a role in regulating neurotransmitter phenotype. This Gallus gallus (Chicken) protein is Inhibin beta A chain (INHBA).